A 36-amino-acid chain; its full sequence is Photosystem I reaction center subunit VIII (36 aa).

Residues 5–27 form a helical membrane-spanning segment; sequence FLPSILVPLVGLVFPAIAIASLF.

This sequence belongs to the PsaI family.

It localises to the plastid. Its subcellular location is the chloroplast thylakoid membrane. Its function is as follows. May help in the organization of the PsaL subunit. The polypeptide is Photosystem I reaction center subunit VIII (Chaetosphaeridium globosum (Charophycean green alga)).